Reading from the N-terminus, the 544-residue chain is Chaperonin GroEL (544 aa).

Residues Thr29–Pro32, Asp86–Thr90, Gly413, Asp477–Leu479, and Asp493 contribute to the ATP site.

This sequence belongs to the chaperonin (HSP60) family. In terms of assembly, forms a cylinder of 14 subunits composed of two heptameric rings stacked back-to-back. Interacts with the co-chaperonin GroES.

It localises to the cytoplasm. It catalyses the reaction ATP + H2O + a folded polypeptide = ADP + phosphate + an unfolded polypeptide.. In terms of biological role, together with its co-chaperonin GroES, plays an essential role in assisting protein folding. The GroEL-GroES system forms a nano-cage that allows encapsulation of the non-native substrate proteins and provides a physical environment optimized to promote and accelerate protein folding. This chain is Chaperonin GroEL, found in Clostridium kluyveri (strain NBRC 12016).